A 115-amino-acid chain; its full sequence is Peptidyl-tRNA hydrolase (115 aa).

This sequence belongs to the PTH2 family.

It localises to the cytoplasm. The enzyme catalyses an N-acyl-L-alpha-aminoacyl-tRNA + H2O = an N-acyl-L-amino acid + a tRNA + H(+). In terms of biological role, the natural substrate for this enzyme may be peptidyl-tRNAs which drop off the ribosome during protein synthesis. In Methanocaldococcus jannaschii (strain ATCC 43067 / DSM 2661 / JAL-1 / JCM 10045 / NBRC 100440) (Methanococcus jannaschii), this protein is Peptidyl-tRNA hydrolase.